A 510-amino-acid polypeptide reads, in one-letter code: Pheromone-processing carboxypeptidase kex1 (510 aa).

The first 21 residues, 1-21 (MISKLLKIVLLTAGVIGNTLA), serve as a signal peptide directing secretion. At 22-468 (DSRIHEQYLV…SPDLGNGNYK (447 aa)) the chain is on the lumenal side. N51 and N104 each carry an N-linked (GlcNAc...) asparagine glycan. Catalysis depends on residues S175 and D367. Residues N392 and N416 are each glycosylated (N-linked (GlcNAc...) asparagine). Residue H427 is part of the active site. Residues 469 to 489 (WLYLGLIPVALTIIILFSIYL) form a helical membrane-spanning segment. Topologically, residues 490–510 (CRRFGLFGLSKQRYQPISPTP) are cytoplasmic.

Belongs to the peptidase S10 family.

It is found in the golgi apparatus. Its subcellular location is the trans-Golgi network membrane. It localises to the vacuole membrane. The enzyme catalyses Preferential release of a C-terminal arginine or lysine residue.. Its function is as follows. Protease with a carboxypeptidase B-like function involved in the C-terminal processing of the lysine and arginine residues from protein precursors. Promotes cell fusion and is involved in the programmed cell death. This is Pheromone-processing carboxypeptidase kex1 (kex1) from Schizosaccharomyces pombe (strain 972 / ATCC 24843) (Fission yeast).